We begin with the raw amino-acid sequence, 420 residues long: UDP-N-acetylglucosamine 1-carboxyvinyltransferase (420 aa).

Residue 22-23 (KN) coordinates phosphoenolpyruvate. Residue Arg-93 coordinates UDP-N-acetyl-alpha-D-glucosamine. Cys-117 acts as the Proton donor in catalysis. Position 117 is a 2-(S-cysteinyl)pyruvic acid O-phosphothioketal (Cys-117). UDP-N-acetyl-alpha-D-glucosamine contacts are provided by residues 162 to 165 (KVSV), Asp-307, and Ile-329.

The protein belongs to the EPSP synthase family. MurA subfamily.

The protein localises to the cytoplasm. The catalysed reaction is phosphoenolpyruvate + UDP-N-acetyl-alpha-D-glucosamine = UDP-N-acetyl-3-O-(1-carboxyvinyl)-alpha-D-glucosamine + phosphate. The protein operates within cell wall biogenesis; peptidoglycan biosynthesis. Cell wall formation. Adds enolpyruvyl to UDP-N-acetylglucosamine. The polypeptide is UDP-N-acetylglucosamine 1-carboxyvinyltransferase (Actinobacillus succinogenes (strain ATCC 55618 / DSM 22257 / CCUG 43843 / 130Z)).